Reading from the N-terminus, the 234-residue chain is Sperm-associated microtubule inner protein 5 (234 aa).

Microtubule inner protein component of sperm flagellar doublet microtubules. As to expression, expressed in testis (at protein level). Strongly expressed in peritubular cells and Leydig cells and weakly expressed in the cytoplasm of spermatocytes.

It is found in the cytoplasm. Its subcellular location is the cytoskeleton. The protein localises to the flagellum axoneme. The protein resides in the nucleus. In terms of biological role, microtubule inner protein (MIP) part of the dynein-decorated doublet microtubules (DMTs) in flagellum axoneme. May serve to reinforce and thus stabilize the microtubule structure in the sperm flagella. In Homo sapiens (Human), this protein is Sperm-associated microtubule inner protein 5.